Reading from the N-terminus, the 892-residue chain is DNA mismatch repair protein MutS (892 aa).

Residue 607 to 614 participates in ATP binding; the sequence is GPNMSGKS. Positions 826–854 are disordered; the sequence is ETKAETEEESQLSFFGGEQSSKKQDKPVL. The span at 845-854 shows a compositional bias: basic and acidic residues; the sequence is SSKKQDKPVL.

It belongs to the DNA mismatch repair MutS family.

In terms of biological role, this protein is involved in the repair of mismatches in DNA. It is possible that it carries out the mismatch recognition step. This protein has a weak ATPase activity. This chain is DNA mismatch repair protein MutS, found in Bacillus cereus (strain AH187).